A 340-amino-acid polypeptide reads, in one-letter code: Putative RRN3-like protein RRN3P2 (340 aa).

The protein belongs to the RRN3 family.

This chain is Putative RRN3-like protein RRN3P2 (RRN3P2), found in Homo sapiens (Human).